A 223-amino-acid polypeptide reads, in one-letter code: uncharacterized protein (223 aa).

It localises to the plastid. The protein resides in the chloroplast. This is an uncharacterized protein from Mesostigma viride (Green alga).